Consider the following 345-residue polypeptide: Holliday junction branch migration complex subunit RuvB (345 aa).

A large ATPase domain (RuvB-L) region spans residues 1 to 183 (MTTQRLVSAA…FGIVHRLEFY (183 aa)). ATP-binding positions include Ile-22, Arg-23, Gly-64, Lys-67, Thr-68, Thr-69, 130-132 (EDY), Arg-173, Tyr-183, and Arg-220. Thr-68 serves as a coordination point for Mg(2+). Residues 184–254 (SVEELSRIVA…VAGKALEMLD (71 aa)) are small ATPAse domain (RuvB-S). The head domain (RuvB-H) stretch occupies residues 257 to 345 (PNGFDQSDRR…NVNEELFGDE (89 aa)). Residues Arg-293, Arg-312, and Arg-317 each coordinate DNA.

This sequence belongs to the RuvB family. As to quaternary structure, homohexamer. Forms an RuvA(8)-RuvB(12)-Holliday junction (HJ) complex. HJ DNA is sandwiched between 2 RuvA tetramers; dsDNA enters through RuvA and exits via RuvB. An RuvB hexamer assembles on each DNA strand where it exits the tetramer. Each RuvB hexamer is contacted by two RuvA subunits (via domain III) on 2 adjacent RuvB subunits; this complex drives branch migration. In the full resolvosome a probable DNA-RuvA(4)-RuvB(12)-RuvC(2) complex forms which resolves the HJ.

The protein localises to the cytoplasm. The enzyme catalyses ATP + H2O = ADP + phosphate + H(+). The RuvA-RuvB-RuvC complex processes Holliday junction (HJ) DNA during genetic recombination and DNA repair, while the RuvA-RuvB complex plays an important role in the rescue of blocked DNA replication forks via replication fork reversal (RFR). RuvA specifically binds to HJ cruciform DNA, conferring on it an open structure. The RuvB hexamer acts as an ATP-dependent pump, pulling dsDNA into and through the RuvAB complex. RuvB forms 2 homohexamers on either side of HJ DNA bound by 1 or 2 RuvA tetramers; 4 subunits per hexamer contact DNA at a time. Coordinated motions by a converter formed by DNA-disengaged RuvB subunits stimulates ATP hydrolysis and nucleotide exchange. Immobilization of the converter enables RuvB to convert the ATP-contained energy into a lever motion, pulling 2 nucleotides of DNA out of the RuvA tetramer per ATP hydrolyzed, thus driving DNA branch migration. The RuvB motors rotate together with the DNA substrate, which together with the progressing nucleotide cycle form the mechanistic basis for DNA recombination by continuous HJ branch migration. Branch migration allows RuvC to scan DNA until it finds its consensus sequence, where it cleaves and resolves cruciform DNA. The polypeptide is Holliday junction branch migration complex subunit RuvB (Methylococcus capsulatus (strain ATCC 33009 / NCIMB 11132 / Bath)).